A 201-amino-acid chain; its full sequence is Large ribosomal subunit protein bL12m (201 aa).

The N-terminal 38 residues, 1–38 (MLPVAASRCLWGPRLGLRGAALRLARQQMPSVCAARQL), are a transit peptide targeting the mitochondrion. 2 disordered regions span residues 37 to 60 (QLRS…APKE) and 109 to 130 (VSAA…QKER). N6-acetyllysine is present on residues Lys128, Lys141, Lys145, and Lys147. Lys153 bears the N6-acetyllysine; alternate mark. Lys153 carries the post-translational modification N6-succinyllysine; alternate. A Glycyl lysine isopeptide (Lys-Gly) (interchain with G-Cter in ubiquitin) cross-link involves residue Lys153. Residue Lys165 is modified to N6-succinyllysine. Lys166 and Lys176 each carry N6-acetyllysine. Lys181 carries the post-translational modification N6-acetyllysine; alternate. Lys181 is subject to N6-succinyllysine; alternate. An N6-acetyllysine modification is found at Lys188.

This sequence belongs to the bacterial ribosomal protein bL12 family. In terms of assembly, component of the mitochondrial ribosome large subunit (39S) which comprises a 16S rRNA and about 50 distinct proteins. Interacts with NOA1. Two mature forms are produced by differential two-step proteolytic cleavage. Cleaved by the mitochondrial processing protease to produce the long mature form and subsequently by the mitochondrial intermediate protease to produce the short mature form. In terms of processing, in the presence of CUL3, undergoes 'Lys-63'-linked ubiquitination at Lys-153 which results in proteasomal degradation.

The protein localises to the mitochondrion matrix. As a component of the mitochondrial large ribosomal subunit, plays a role in mitochondrial translation. When present in mitochondria as a free protein not associated with the ribosome, associates with mitochondrial RNA polymerase POLRMT to activate transcription. Required for POLRMT stability. The sequence is that of Large ribosomal subunit protein bL12m (Mrpl12) from Mus musculus (Mouse).